The sequence spans 254 residues: Activity-regulated cytoskeleton associated protein 1 (254 aa).

This sequence belongs to the ARC/ARG3.1 family. In terms of assembly, homooligomer; homooligomerizes into virion-like capsids. In terms of tissue distribution, expressed in a specific population of brain neurons, named E347, that are necessary and sufficient for proper body fat storage.

It is found in the extracellular vesicle membrane. Its subcellular location is the synapse. In terms of biological role, master regulator of synaptic plasticity that self-assembles into virion-like capsids that encapsulate RNAs and mediate intercellular RNA transfer from motorneurons to muscles. Arc1 protein is released from motorneurons in extracellular vesicles that mediate the transfer of Arc1 mRNA into muscle cells, where Arc1 mRNA can undergo activity-dependent translation. Intercellular transfer od Arc1 mRNA is required for synaptic plasticity at the neuromuscular junction. May play a role in energy balance: required for regulation of body fat by a specific population of brain neurons, named E347, that are necessary and sufficient for proper body fat storage. This is Activity-regulated cytoskeleton associated protein 1 from Drosophila melanogaster (Fruit fly).